The chain runs to 384 residues: Sensor protein VanS (384 aa).

Transmembrane regions (helical) follow at residues 21–41 and 76–96; these read MYIV…RSMI and IDIF…RVML. The 216-residue stretch at 161–376 folds into the Histidine kinase domain; it reads YLAHDIKTPL…TFRVELPAMP (216 aa). The residue at position 164 (His-164) is a Phosphohistidine; by autocatalysis. An involved in low-affinity ATP-binding. Exhibits higher affinity for ATP than GTP region spans residues 221 to 384; sequence QTITLTKTHI…MPDLVDKRRS (164 aa).

Autophosphorylated.

The protein resides in the membrane. The enzyme catalyses ATP + protein L-histidine = ADP + protein N-phospho-L-histidine.. Phosphorylation of VanR inhibited by EDTA. Functionally, member of the two-component regulatory system VanS/VanR. Functions as a sensor protein kinase which is autophosphorylated at a histidine residue in response to environmental stimuli, such as glycopeptide antibiotics. VanS transfers its phosphate group to transcriptional regulatory protein VanR, thereby modulating expression of target genes. Binds directly to, and autophosphorylation activity is enhanced by, the glycopeptides vancomycin and teicoplanin, in vitro. However it has also been reported that autophosphorylation, phosphate transfer to VanR and dephosphorylation of phospho-VanR are all unaffected by the presence of vancomycin, in vitro. In the absence of vancomycin, negatively regulates VanR-mediated activation of vanS, vanH, vanA and vanX, probably as a result of dephosphorylating phospho-VanR. May inhibit promoter-specific DNA binding by VanR. Involved in conferring vancomycin resistance. In Enterococcus faecium (Streptococcus faecium), this protein is Sensor protein VanS.